Consider the following 270-residue polypeptide: MSNLQTRIITAIVLGTITLWLTWVGGVGFTLFSIAIGLAMFYEWTELSATRQTAFSRLFGWAWLIVTGILLILDRGALLTIGFLVAGCAILLVTQWKSGRGWPAAGLFYAGFSALSLSLLRGDEPFGFTTIVFLFAVVWSTDIAAYFNGRALGGPKLAPRFSPNKTWSGAIGGAAAAVAGGLLVASLVAAPGGWGVPVLALLLSIVSQIGDLAESWVKRQFGAKDSGRLLPGHGGVLDRVDGLVAAAALLYLFGAIFAEPDVPSAIFFSF.

The next 7 helical transmembrane spans lie at 19–39, 53–73, 76–96, 101–121, 126–146, 183–203, and 248–268; these read LWLT…IGLA, TAFS…LLIL, GALL…VTQW, GWPA…SLLR, FGFT…IAAY, LVAS…ALLL, and ALLY…AIFF.

Belongs to the CDS family.

Its subcellular location is the cell inner membrane. It catalyses the reaction a 1,2-diacyl-sn-glycero-3-phosphate + CTP + H(+) = a CDP-1,2-diacyl-sn-glycerol + diphosphate. Its pathway is phospholipid metabolism; CDP-diacylglycerol biosynthesis; CDP-diacylglycerol from sn-glycerol 3-phosphate: step 3/3. This Brucella suis biovar 1 (strain 1330) protein is Phosphatidate cytidylyltransferase (cdsA).